The primary structure comprises 116 residues: MENTARAILRYAHLSPYKARQVINLIRGKDIATALAILSQIPKKSARIVEKVLKSAIANAEFKGMDIDNLYISKIHAEEGPMLKRYTPKAHGRATMIRRRFSHIYVYLAEKQQEDK.

Belongs to the universal ribosomal protein uL22 family. In terms of assembly, part of the 50S ribosomal subunit.

In terms of biological role, this protein binds specifically to 23S rRNA; its binding is stimulated by other ribosomal proteins, e.g. L4, L17, and L20. It is important during the early stages of 50S assembly. It makes multiple contacts with different domains of the 23S rRNA in the assembled 50S subunit and ribosome. Functionally, the globular domain of the protein is located near the polypeptide exit tunnel on the outside of the subunit, while an extended beta-hairpin is found that lines the wall of the exit tunnel in the center of the 70S ribosome. This Sulfurihydrogenibium sp. (strain YO3AOP1) protein is Large ribosomal subunit protein uL22.